The sequence spans 124 residues: Fluoride-specific ion channel FluC (124 aa).

3 helical membrane passes run 5 to 27, 70 to 90, and 95 to 115; these read LFVA…FMLQ, VGLL…LLLI, and WIKA…MVYL. Na(+) is bound by residues glycine 74 and threonine 77.

This sequence belongs to the fluoride channel Fluc/FEX (TC 1.A.43) family.

The protein localises to the cell inner membrane. It catalyses the reaction fluoride(in) = fluoride(out). Its activity is regulated as follows. Na(+) is not transported, but it plays an essential structural role and its presence is essential for fluoride channel function. In terms of biological role, fluoride-specific ion channel. Important for reducing fluoride concentration in the cell, thus reducing its toxicity. In Shewanella sediminis (strain HAW-EB3), this protein is Fluoride-specific ion channel FluC.